A 396-amino-acid chain; its full sequence is uncharacterized protein (396 aa).

Helical transmembrane passes span 7 to 27 (SDDV…SIGL), 36 to 56 (AVSG…VGVL), 62 to 82 (VYDT…LFQI), 94 to 114 (LLFI…LAFF), 159 to 179 (VVAD…IPAL), 218 to 238 (IAFN…VSGY), 250 to 270 (GTLG…IFLF), 285 to 305 (TFLI…RLIV), 310 to 330 (LILL…LAAG), 340 to 360 (ILLA…MAIA), and 367 to 387 (VAPI…VGTF).

It is found in the cell membrane. This is an uncharacterized protein from Bacillus subtilis (strain 168).